We begin with the raw amino-acid sequence, 2298 residues long: Protein Ycf2 (2298 aa).

1640–1647 (GSIGTGRS) provides a ligand contact to ATP.

It belongs to the Ycf2 family.

The protein resides in the plastid. The protein localises to the chloroplast stroma. Probable ATPase of unknown function. Its presence in a non-photosynthetic plant (Epifagus virginiana) and experiments in tobacco indicate that it has an essential function which is probably not related to photosynthesis. In Carica papaya (Papaya), this protein is Protein Ycf2.